The primary structure comprises 252 residues: Triosephosphate isomerase (252 aa).

Asparagine 10–lysine 12 contributes to the substrate binding site. Catalysis depends on histidine 96, which acts as the Electrophile. Glutamate 168 acts as the Proton acceptor in catalysis. Residues glycine 174, serine 213, and glycine 234–glycine 235 contribute to the substrate site.

Belongs to the triosephosphate isomerase family. Homodimer.

It is found in the cytoplasm. It catalyses the reaction D-glyceraldehyde 3-phosphate = dihydroxyacetone phosphate. It functions in the pathway carbohydrate biosynthesis; gluconeogenesis. The protein operates within carbohydrate degradation; glycolysis; D-glyceraldehyde 3-phosphate from glycerone phosphate: step 1/1. Involved in the gluconeogenesis. Catalyzes stereospecifically the conversion of dihydroxyacetone phosphate (DHAP) to D-glyceraldehyde-3-phosphate (G3P). This is Triosephosphate isomerase from Idiomarina loihiensis (strain ATCC BAA-735 / DSM 15497 / L2-TR).